The primary structure comprises 495 residues: Putative aldehyde dehydrogenase AldA (495 aa).

Position 212-218 (Gly212–Gly218) interacts with NAD(+). Catalysis depends on residues Glu256 and Cys290.

It belongs to the aldehyde dehydrogenase family.

The enzyme catalyses an aldehyde + NAD(+) + H2O = a carboxylate + NADH + 2 H(+). This is Putative aldehyde dehydrogenase AldA (aldA) from Staphylococcus aureus (strain MSSA476).